Reading from the N-terminus, the 627-residue chain is Plasmepsin IX (627 aa).

Residues 1 to 13 (MFFINFKKIKKKQ) lie on the Cytoplasmic side of the membrane. Residues 14 to 34 (FPIYLTQHRIITVFLIFIYFI) traverse the membrane as a helical; Signal-anchor for type II membrane protein segment. The Lumenal portion of the chain corresponds to 35-627 (NLKDCFHINN…SSLHNKINNL (593 aa)). Residues 228-605 (YVGYIQIGTP…NNNSSYVGIA (378 aa)) enclose the Peptidase A1 domain. Residues D246 and D495 contribute to the active site.

This sequence belongs to the peptidase A1 family. Autocleaved into a p55 mature form.

It localises to the membrane. It is found in the cytoplasmic vesicle. The protein resides in the secretory vesicle. The protein localises to the rhoptry. Inhibited by small molecule 49c. Inhibited by small molecule WM382. Functionally, during the asexual blood stage, initiates the proteolytic maturation of several rhoptry proteins and thus, is required for merozoite invasion of host erythrocytes and probably the subsequent development of the ring-stage. Cleaves rhoptry associated protein 1 RAP1 and apical sushi protein ASP during schizont maturation. Also cleaves rhoptry protein RON3. The chain is Plasmepsin IX from Plasmodium falciparum (isolate 3D7).